The chain runs to 476 residues: FAD-dependent monooxygenase ausM (476 aa).

Residues glutamate 41, glycine 55, and arginine 114 each coordinate FAD. The active site involves tyrosine 222. Aspartate 314 and alanine 327 together coordinate FAD. A helical transmembrane segment spans residues 447-467; it reads LGSTPIHMLTLLLPCLFYFMY.

The protein belongs to the paxM FAD-dependent monooxygenase family. FAD is required as a cofactor.

It localises to the membrane. It functions in the pathway secondary metabolite biosynthesis; terpenoid biosynthesis. In terms of biological role, FAD-dependent monooxygenase; part of the gene cluster A that mediates the biosynthesis of the fungal meroterpenoid acetoxydehydroaustin. The first step of the pathway is the synthesis of 3,5-dimethylorsellinic acid by the polyketide synthase ausA. 3,5-dimethylorsellinic acid is then prenylated by the polyprenyl transferase ausN. Further epoxidation by the FAD-dependent monooxygenase ausM and cyclization by the probable terpene cyclase ausL lead to the formation of protoaustinoid A. Protoaustinoid A is then oxidized to spiro-lactone preaustinoid A3 by the combined action of the FAD-binding monooxygenases ausB and ausC, and the dioxygenase ausE. Acid-catalyzed keto-rearrangement and ring contraction of the tetraketide portion of preaustinoid A3 by ausJ lead to the formation of preaustinoid A4. The aldo-keto reductase ausK, with the help of ausH, is involved in the next step by transforming preaustinoid A4 into isoaustinone which is in turn hydroxylated by the P450 monooxygenase ausI to form austinolide. The cytochrome P450 monooxygenase ausG then modifies austinolide to austinol. Austinol is further acetylated to austin by the O-acetyltransferase ausP, which spontaneously changes to dehydroaustin. The cytochrome P450 monooxygenase then converts dehydroaustin is into 7-dehydrodehydroaustin. The hydroxylation catalyzed by ausR permits the second O-acetyltransferase ausQ to add an additional acetyl group to the molecule, leading to the formation of acetoxydehydroaustin. Due to genetic rearrangements of the clusters and the subsequent loss of some enzymes, the end product of the Penicillium brasilianum austinoid biosynthesis clusters is acetoxydehydroaustin. This chain is FAD-dependent monooxygenase ausM, found in Penicillium brasilianum.